The primary structure comprises 254 residues: 3-deoxy-manno-octulosonate cytidylyltransferase (254 aa).

It belongs to the KdsB family.

It is found in the cytoplasm. It carries out the reaction 3-deoxy-alpha-D-manno-oct-2-ulosonate + CTP = CMP-3-deoxy-beta-D-manno-octulosonate + diphosphate. Its pathway is nucleotide-sugar biosynthesis; CMP-3-deoxy-D-manno-octulosonate biosynthesis; CMP-3-deoxy-D-manno-octulosonate from 3-deoxy-D-manno-octulosonate and CTP: step 1/1. The protein operates within bacterial outer membrane biogenesis; lipopolysaccharide biosynthesis. Activates KDO (a required 8-carbon sugar) for incorporation into bacterial lipopolysaccharide in Gram-negative bacteria. The chain is 3-deoxy-manno-octulosonate cytidylyltransferase from Polynucleobacter asymbioticus (strain DSM 18221 / CIP 109841 / QLW-P1DMWA-1) (Polynucleobacter necessarius subsp. asymbioticus).